The following is an 84-amino-acid chain: MKVTLIAILTCAAVLVLHTTAAEELEESQLMEVGMPDTELEAVDEERLFECSVSCEIEKEGNKDCKKKKCKGGWKCKFNMCVKV.

Residues 1–22 (MKVTLIAILTCAAVLVLHTTAA) form the signal peptide. Positions 23 to 47 (EELEESQLMEVGMPDTELEAVDEER) are excised as a propeptide. Disulfide bonds link cysteine 51-cysteine 65, cysteine 55-cysteine 76, and cysteine 70-cysteine 81.

This sequence belongs to the neurotoxin 12 (Hwtx-2) family. 02 (Hwtx-2) subfamily. As to expression, expressed by the venom gland.

It localises to the secreted. Functionally, postsynaptic neurotoxin. This chain is U4-theraphotoxin-Hhn1a, found in Cyriopagopus hainanus (Chinese bird spider).